The chain runs to 83 residues: Large ribosomal subunit protein bL27 (83 aa).

The tract at residues 1-22 (MAHKKGQGSTRNGRDSHSKRLG) is disordered.

The protein belongs to the bacterial ribosomal protein bL27 family.

The sequence is that of Large ribosomal subunit protein bL27 from Protochlamydia amoebophila (strain UWE25).